A 562-amino-acid polypeptide reads, in one-letter code: Tetratricopeptide repeat protein 34 (562 aa).

A disordered region spans residues 1–30 (MLHKKPQRANENGISQRKKPSDQDNSSVKE). A compositionally biased stretch (basic and acidic residues) spans 19–30 (KPSDQDNSSVKE). TPR repeat units lie at residues 51–84 (DVSR…SSQR), 175–208 (KDSL…EPYN), 210–242 (EALS…DASY), 304–337 (AHFH…NAID), 388–421 (FQAA…SNNN), 423–455 (KYLR…HSSH), 461–494 (AEDY…EHAS), and 509–542 (AGIF…DENN).

In Xenopus laevis (African clawed frog), this protein is Tetratricopeptide repeat protein 34 (ttc34).